The sequence spans 113 residues: Large ribosomal subunit protein uL22 (113 aa).

This sequence belongs to the universal ribosomal protein uL22 family. In terms of assembly, part of the 50S ribosomal subunit.

This protein binds specifically to 23S rRNA; its binding is stimulated by other ribosomal proteins, e.g. L4, L17, and L20. It is important during the early stages of 50S assembly. It makes multiple contacts with different domains of the 23S rRNA in the assembled 50S subunit and ribosome. Its function is as follows. The globular domain of the protein is located near the polypeptide exit tunnel on the outside of the subunit, while an extended beta-hairpin is found that lines the wall of the exit tunnel in the center of the 70S ribosome. The chain is Large ribosomal subunit protein uL22 from Natranaerobius thermophilus (strain ATCC BAA-1301 / DSM 18059 / JW/NM-WN-LF).